The following is a 341-amino-acid chain: MQQLTIAIDAMGGDFGPQVTVPAVVQALSQFPELKVTVVGDRDAISTQLTHLNYTLNPRFSIVHSDSVIGNNTQPSKALRHSRGSSMRMALDLVASKDVDACISAGNTGALMGLSRFTLKLLPGVERPALISPLPTKNNQRTWMLDLGANVSCDAETLFQFAVMGSELAEQSIGRKAKVALLNIGEEEIKGNDQIKRCAEMLNQCQNIEFIGYIEGDKLYQGIADVVVCDGFVGNVCLKTSEGVAHLFLDQLKSQLLTSKFKQILAKWLFGDVISSLKGLNPDQYNGASLIGLRGIVVKSHGSADISAFNNAIKEAVHEIKRQIPNRISDRLEAVLLERHY.

It belongs to the PlsX family. Homodimer. Probably interacts with PlsY.

It is found in the cytoplasm. The catalysed reaction is a fatty acyl-[ACP] + phosphate = an acyl phosphate + holo-[ACP]. Its pathway is lipid metabolism; phospholipid metabolism. Its function is as follows. Catalyzes the reversible formation of acyl-phosphate (acyl-PO(4)) from acyl-[acyl-carrier-protein] (acyl-ACP). This enzyme utilizes acyl-ACP as fatty acyl donor, but not acyl-CoA. The chain is Phosphate acyltransferase from Aliivibrio salmonicida (strain LFI1238) (Vibrio salmonicida (strain LFI1238)).